The sequence spans 319 residues: Malate dehydrogenase (319 aa).

Residues 10–15 and Asp34 each bind NAD(+); that span reads GAGNIG. Residues Arg83 and Arg89 each contribute to the substrate site. NAD(+)-binding positions include Asn96 and 119–121; that span reads ITN. Residues Asn121 and Arg152 each contribute to the substrate site. The active-site Proton acceptor is His176.

Belongs to the LDH/MDH superfamily. MDH type 3 family.

The catalysed reaction is (S)-malate + NAD(+) = oxaloacetate + NADH + H(+). Catalyzes the reversible oxidation of malate to oxaloacetate. In Francisella tularensis subsp. mediasiatica (strain FSC147), this protein is Malate dehydrogenase.